Here is a 506-residue protein sequence, read N- to C-terminus: Protein NEN3 (506 aa).

One can recognise an Exonuclease domain in the interval 15-176; it reads FFDLETAVPT…LDDVRMNLEV (162 aa). Positions 17 and 19 each coordinate Mg(2+). H164 acts as the Proton donor/acceptor in catalysis. Residue D169 coordinates Mg(2+). Disordered regions lie at residues 204–240 and 289–313; these read KSPR…SSVD and AEEA…KDES. The segment covering 222–238 has biased composition (low complexity); it reads SSTSSSSSPKTDPSSSS. A compositionally biased stretch (basic and acidic residues) spans 290 to 299; the sequence is EEAKTVRQQD.

The cofactor is Mg(2+).

In terms of biological role, probable exonuclease that may be involved in enuclation of sieve elements. The chain is Protein NEN3 (NEN3) from Arabidopsis thaliana (Mouse-ear cress).